We begin with the raw amino-acid sequence, 271 residues long: Glutamate racemase (271 aa).

Residues 10 to 11 (DS) and 42 to 43 (YG) contribute to the substrate site. The Proton donor/acceptor role is filled by C73. Substrate is bound at residue 74 to 75 (NS). C183 functions as the Proton donor/acceptor in the catalytic mechanism. 184–185 (TH) contributes to the substrate binding site.

It belongs to the aspartate/glutamate racemases family.

It catalyses the reaction L-glutamate = D-glutamate. The protein operates within cell wall biogenesis; peptidoglycan biosynthesis. Its function is as follows. Provides the (R)-glutamate required for cell wall biosynthesis. The sequence is that of Glutamate racemase from Saccharopolyspora erythraea (strain ATCC 11635 / DSM 40517 / JCM 4748 / NBRC 13426 / NCIMB 8594 / NRRL 2338).